Here is a 622-residue protein sequence, read N- to C-terminus: Lamin Dm0 (622 aa).

A disordered region spans residues 1 to 50; that stretch reads MSSKSRRAGTATPQPGNTSTPRPPSAGPQPPPPSTHSQTASSPLSPTRHS. The residue at position 2 (S2) is an N-acetylserine. The tract at residues 2–56 is head; the sequence is SSKSRRAGTATPQPGNTSTPRPPSAGPQPPPPSTHSQTASSPLSPTRHSRVAEKV. T10, T12, and T20 each carry phosphothreonine. Residues 21–34 show a composition bias toward pro residues; sequence PRPPSAGPQPPPPS. 2 positions are modified to phosphoserine: S25 and S34. Residue T39 is modified to Phosphothreonine. 3 positions are modified to phosphoserine: S41, S42, and S45. The residue at position 47 (T47) is a Phosphothreonine. An IF rod domain is found at 54–410; sequence EKVELQNLND…KLLVGEEARL (357 aa). The interval 55 to 91 is coil 1A; sequence KVELQNLNDRLATYIDRVRNLETENSRLTIEVQTTRD. The segment at 92-103 is linker 1; that stretch reads TVTRETTNIKNI. The coil 1B stretch occupies residues 104 to 241; the sequence is FEAELLETRR…QIHSQEINES (138 aa). At S235 the chain carries Phosphoserine. The segment at 242–265 is linker 2; sequence RRIKQTEYSEIDGRLSSEYDAKLK. Y249 bears the Phosphotyrosine mark. 2 positions are modified to phosphoserine: S250 and S311. The segment at 266 to 408 is coil 2; that stretch reads QSLQELRAQY…YDKLLVGEEA (143 aa). The tail stretch occupies residues 409-619; the sequence is RLNITPATNT…GDPQQSNEKC (211 aa). A phosphothreonine mark is found at T413 and T435. Positions 429 to 440 are enriched in polar residues; that stretch reads RNSTRATPSRRT. The interval 429–448 is disordered; that stretch reads RNSTRATPSRRTPSAAVKRK. A Phosphoserine modification is found at S442. Positions 446-451 match the Nuclear localization signal motif; the sequence is KRKRAV. Phosphoserine occurs at positions 455 and 459. An LTD domain is found at 461–588; that stretch reads ADYYVSASAK…RIVSQHTSSS (128 aa). S595 is subject to Phosphoserine. The residue at position 597 (T597) is a Phosphothreonine. The segment at 603 to 622 is disordered; the sequence is EQLYHQQGDPQQSNEKCAIM. Polar residues predominate over residues 605–622; sequence LYHQQGDPQQSNEKCAIM. S615 is modified (phosphoserine). At C619 the chain carries Cysteine methyl ester. C619 carries S-farnesyl cysteine lipidation. Positions 620–622 are cleaved as a propeptide — removed in mature form; the sequence is AIM.

This sequence belongs to the intermediate filament family. Interacts directly with LBR. Interacts with MAN1. Interacts with Ote. Post-translationally, three forms of lamin have been identified in D.melanogaster, lamin Dm0 is rapidly processed to lamin Dm1 in the cytoplasm, Dm1 is then assembled in the nuclear envelope and is then phosphorylated, forming lamin Dm2. In terms of tissue distribution, constitutively expressed in all tissues (at protein level). Expressed in spermatocytes (at protein level).

It localises to the nucleus. Its subcellular location is the nucleus inner membrane. The protein localises to the nucleus envelope. It is found in the nucleus lamina. The protein resides in the cytoplasm. It localises to the cytoskeleton. Its subcellular location is the spindle pole. Its function is as follows. Lamins are components of the nuclear lamina, a fibrous layer on the nucleoplasmic side of the inner nuclear membrane, which is thought to provide a framework for the nuclear envelope and may also interact with chromatin. May have a role in the localization of the LEM domain proteins Ote, bocks and MAN1 to the nuclear membrane. In spermatocytes, plays a role in maintaining type-A lamin LamC nuclear localization; regulates meiotic cytokinesis by maintaining the structure of the spindle envelope, and by contributing to the formation of the contractile ring and central spindle. Required for nuclear migration and to link the microtubule organizing center (MTOC) to the nucleus. In addition, is required for nuclear envelope localization of klar. The polypeptide is Lamin Dm0 (Drosophila melanogaster (Fruit fly)).